Here is a 102-residue protein sequence, read N- to C-terminus: Pole-localizer protein TmaR (102 aa).

A coiled-coil region spans residues 7-34 (IINQARRKNKLKRELQDNQKKIRDNQKR).

The protein belongs to the pole-localizer TmaR family.

The protein resides in the cytoplasm. Its function is as follows. Pole-localizer protein involved in the regulation of several cellular processes. The polypeptide is Pole-localizer protein TmaR (Aliivibrio fischeri (strain ATCC 700601 / ES114) (Vibrio fischeri)).